An 858-amino-acid chain; its full sequence is Phosphoenolpyruvate carboxylase (858 aa).

Residues His-145 and Lys-531 contribute to the active site.

This sequence belongs to the PEPCase type 1 family. Mg(2+) serves as cofactor.

It carries out the reaction oxaloacetate + phosphate = phosphoenolpyruvate + hydrogencarbonate. Forms oxaloacetate, a four-carbon dicarboxylic acid source for the tricarboxylic acid cycle. This chain is Phosphoenolpyruvate carboxylase, found in Thermus thermophilus (strain ATCC BAA-163 / DSM 7039 / HB27).